Consider the following 455-residue polypeptide: Gamma-glutamyl phosphate reductase (455 aa).

This sequence belongs to the gamma-glutamyl phosphate reductase family.

The protein localises to the cytoplasm. It carries out the reaction L-glutamate 5-semialdehyde + phosphate + NADP(+) = L-glutamyl 5-phosphate + NADPH + H(+). It functions in the pathway amino-acid biosynthesis; L-proline biosynthesis; L-glutamate 5-semialdehyde from L-glutamate: step 2/2. In terms of biological role, catalyzes the NADPH-dependent reduction of L-glutamate 5-phosphate into L-glutamate 5-semialdehyde and phosphate. The product spontaneously undergoes cyclization to form 1-pyrroline-5-carboxylate. The chain is Gamma-glutamyl phosphate reductase from Synechococcus sp. (strain JA-3-3Ab) (Cyanobacteria bacterium Yellowstone A-Prime).